The primary structure comprises 211 residues: Vascular-related unknown protein 1 (211 aa).

The span at 1–12 (MMDTFSCNSYEQ) shows a compositional bias: polar residues. Residues 1 to 40 (MMDTFSCNSYEQNHPHDDDIDIDAHDHDSHGGDHQEESGW) are disordered. Residues 13–37 (NHPHDDDIDIDAHDHDSHGGDHQEE) show a composition bias toward basic and acidic residues.

As to expression, expressed in vascular tissues of cotyledons, rosette leaves, sepals, petals, anther filaments. Expressed in roots, inflorescence stems and developing seeds.

The protein localises to the cytoplasm. It localises to the nucleus. Its function is as follows. Involved in the regulation of xylem development and growth. May regulate secondary wall formation during vascular development by modulation of brassinosteroid, gibberellin and auxin hormone signaling pathways. The sequence is that of Vascular-related unknown protein 1 from Arabidopsis thaliana (Mouse-ear cress).